Here is a 286-residue protein sequence, read N- to C-terminus: Bifunctional protein FolD (286 aa).

NADP(+) is bound by residues 168-170, Thr195, and Val236; that span reads GRG.

The protein belongs to the tetrahydrofolate dehydrogenase/cyclohydrolase family. As to quaternary structure, homodimer.

It catalyses the reaction (6R)-5,10-methylene-5,6,7,8-tetrahydrofolate + NADP(+) = (6R)-5,10-methenyltetrahydrofolate + NADPH. It carries out the reaction (6R)-5,10-methenyltetrahydrofolate + H2O = (6R)-10-formyltetrahydrofolate + H(+). Its pathway is one-carbon metabolism; tetrahydrofolate interconversion. In terms of biological role, catalyzes the oxidation of 5,10-methylenetetrahydrofolate to 5,10-methenyltetrahydrofolate and then the hydrolysis of 5,10-methenyltetrahydrofolate to 10-formyltetrahydrofolate. The protein is Bifunctional protein FolD of Mycolicibacterium gilvum (strain PYR-GCK) (Mycobacterium gilvum (strain PYR-GCK)).